The following is a 336-amino-acid chain: O-methyltransferase 2 (336 aa).

Residues Gly170, Asp198, Asn221, Phe222, and Lys237 each coordinate S-adenosyl-L-methionine. Residue His241 is the Proton acceptor of the active site.

The protein belongs to the class I-like SAM-binding methyltransferase superfamily. Cation-independent O-methyltransferase family. COMT subfamily.

It catalyses the reaction (3,5-dichloro-2,4,6-trihydroxyphenyl)hexan-1-one + S-adenosyl-L-methionine = 1-(3,5-dichloro-2,6-dihydroxy-4-methoxyphenyl)hexan-1-one + S-adenosyl-L-homocysteine + H(+). The polypeptide is O-methyltransferase 2 (omt2) (Dictyostelium discoideum (Social amoeba)).